Consider the following 274-residue polypeptide: Pyrroline-5-carboxylate reductase 3 (274 aa).

Ala-2 carries the N-acetylalanine modification.

Belongs to the pyrroline-5-carboxylate reductase family. In terms of assembly, homodecamer; composed of 5 homodimers.

The protein resides in the cytoplasm. It catalyses the reaction L-proline + NADP(+) = (S)-1-pyrroline-5-carboxylate + NADPH + 2 H(+). It carries out the reaction L-proline + NAD(+) = (S)-1-pyrroline-5-carboxylate + NADH + 2 H(+). It functions in the pathway amino-acid biosynthesis; L-proline biosynthesis; L-proline from L-glutamate 5-semialdehyde: step 1/1. Oxidoreductase that catalyzes the last step in proline biosynthesis, which corresponds to the reduction of pyrroline-5-carboxylate (P5C) to L-proline using NAD(P)H. Proline is synthesized from either glutamate or ornithine; both are converted to P5C, and then to proline via pyrroline-5-carboxylate reductases (PYCRs). PYCR3 is exclusively linked to the biosynthesis of proline from ornithine. In Mus musculus (Mouse), this protein is Pyrroline-5-carboxylate reductase 3.